Here is a 486-residue protein sequence, read N- to C-terminus: CUGBP Elav-like family member 5 (486 aa).

Residues 1-11 are compositionally biased toward basic and acidic residues; sequence MARLTEREARR. The interval 1–39 is disordered; it reads MARLTEREARRQQQQHPPQQQQPRACPMSGPEPPAQQSD. Positions 12 to 24 are enriched in low complexity; that stretch reads QQQQHPPQQQQPR. 3 RRM domains span residues 47–128, 135–215, and 401–479; these read IKLF…PADS, RKLF…FADT, and CNLF…LKRP.

It belongs to the CELF/BRUNOL family.

It localises to the nucleus. The protein resides in the cytoplasm. Its function is as follows. RNA-binding protein that may be implicated in the regulation of pre-mRNA alternative splicing. This chain is CUGBP Elav-like family member 5 (celf5), found in Xenopus tropicalis (Western clawed frog).